The primary structure comprises 52 residues: UPF0391 membrane protein XCV0245 (52 aa).

The next 2 membrane-spanning stretches (helical) occupy residues 5–25 and 27–47; these read AIIFFVIAIIAAVLGFSGIAG and ATNIAWILFVVFLILAVISMF.

The protein belongs to the UPF0391 family.

It localises to the cell membrane. The protein is UPF0391 membrane protein XCV0245 of Xanthomonas euvesicatoria pv. vesicatoria (strain 85-10) (Xanthomonas campestris pv. vesicatoria).